Here is a 503-residue protein sequence, read N- to C-terminus: Carboxyl-terminal PDZ ligand of neuronal nitric oxide synthase protein (503 aa).

The 166-residue stretch at 26–191 folds into the PID domain; that stretch reads FQHGISFEAK…ESERNSDGSG (166 aa). The disordered stretch occupies residues 170 to 212; the sequence is HTQQNADGQEDGESERNSDGSGDPGRQLTGAERVSTAAAEETD. Phosphoserine is present on residues Ser-183, Ser-187, Ser-190, and Ser-262. The stretch at 318 to 359 forms a coiled coil; it reads AAEAAARLEAQARVHQLLLQNKDMLQHISLLVKQVQELELKL. 4 positions are modified to phosphoserine: Ser-367, Ser-370, Ser-397, and Ser-413. An interaction with NOS1 region spans residues 491–503; sequence QELGDSLDDEIAV. Positions 501 to 503 match the PDZ-binding motif; that stretch reads IAV.

As to quaternary structure, interacts with the PDZ domain of NOS1 or the second PDZ domain of DLG4 through its C-terminus. Interacts with RASD1 and SYN1, SYN2 and SYN3 via its PID domain. Forms a ternary complex with NOS1 and SYN1. Forms a ternary complex with NOS1 and RASD1.

The protein localises to the cell projection. It localises to the filopodium. Its subcellular location is the podosome. Its function is as follows. Adapter protein involved in neuronal nitric-oxide (NO) synthesis regulation via its association with nNOS/NOS1. The complex formed with NOS1 and synapsins is necessary for specific NO and synapsin functions at a presynaptic level. Mediates an indirect interaction between NOS1 and RASD1 leading to enhance the ability of NOS1 to activate RASD1. Competes with DLG4 for interaction with NOS1, possibly affecting NOS1 activity by regulating the interaction between NOS1 and DLG4. In kidney podocytes, plays a role in podosomes and filopodia formation through CDC42 activation. The polypeptide is Carboxyl-terminal PDZ ligand of neuronal nitric oxide synthase protein (Mus musculus (Mouse)).